Consider the following 306-residue polypeptide: Acyl transferase (306 aa).

Catalysis depends on charge relay system residues Ser-117, Asp-214, and His-244.

Belongs to the LuxD family.

It functions in the pathway lipid metabolism; fatty acid reduction for biolumincescence. Acyl transferase is part of the fatty acid reductase system required for aldehyde biosynthesis; it produces fatty acids for the luminescent reaction. This chain is Acyl transferase, found in Photobacterium phosphoreum.